The sequence spans 445 residues: Alpha/beta hydrolase psoB (445 aa).

S246 acts as the Nucleophile in catalysis.

It belongs to the AB hydrolase superfamily. FUS2 hydrolase family. Homodimer.

Its pathway is secondary metabolite biosynthesis. In terms of biological role, alpha/beta hydrolase; part of the gene cluster that mediates the biosynthesis of pseurotin A, a competitive inhibitor of chitin synthase and an inducer of nerve-cell proliferation. The PKS-NRPS hybrid synthetase psoA is responsible for the biosynthesis of azaspirene, one of the first intermediates having the 1-oxa-7-azaspiro[4,4]-non-2-ene-4,6-dione core of pseurotin, via condensation of one acetyl-CoA, 4 malonyl-CoA, and a L-phenylalanine molecule. The dual-functional monooxygenase/methyltransferase psoF seems to be involved in the addition of the C3 methyl group onto the pseurotin scaffold. Azaspirene is then converted to synerazol through 4 steps including oxidation of C17 by the cytochrome P450 monooxygenase psoD, O-methylation of the hydroxy group of C8 by the methyltransferase psoC, and the trans-to-cis isomerization of the C13 olefin by the glutathione S-transferase psoE. The fourth step of synerazol production is performed by the dual-functional monooxygenase/methyltransferase psoF which seems to catalyze the epoxidation of the intermediate deepoxy-synerazol. Synerazol can be attacked by a water molecule nonenzymatically at two different positions to yield two diol products, pseurotin A and pseurotin D. This is Alpha/beta hydrolase psoB from Aspergillus fumigatus (strain ATCC MYA-4609 / CBS 101355 / FGSC A1100 / Af293) (Neosartorya fumigata).